Here is a 435-residue protein sequence, read N- to C-terminus: Probable exopolygalacturonase B (435 aa).

Residues methionine 1 to alanine 15 form the signal peptide. Residues asparagine 59, asparagine 184, and asparagine 224 are each glycosylated (N-linked (GlcNAc...) asparagine). Residue aspartate 254 is the Proton donor of the active site. A disulfide bridge links cysteine 256 with cysteine 273. N-linked (GlcNAc...) asparagine glycans are attached at residues asparagine 262 and asparagine 274. The active site involves histidine 277. N-linked (GlcNAc...) asparagine glycosylation is found at asparagine 301, asparagine 328, asparagine 365, and asparagine 368. A disulfide bond links cysteine 391 and cysteine 397.

The protein belongs to the glycosyl hydrolase 28 family.

The protein localises to the secreted. It catalyses the reaction [(1-&gt;4)-alpha-D-galacturonosyl](n) + H2O = alpha-D-galacturonate + [(1-&gt;4)-alpha-D-galacturonosyl](n-1). Its function is as follows. Specific in hydrolyzing the terminal glycosidic bond of polygalacturonic acid and oligogalacturonates. This is Probable exopolygalacturonase B (pgxB) from Aspergillus terreus (strain NIH 2624 / FGSC A1156).